A 336-amino-acid chain; its full sequence is Secreted effector protein SifA (336 aa).

Positions 1–330 (MPITIGNGFL…LHVRSEQQSG (330 aa)) are interaction with host PLEKHM2.

This sequence belongs to the Sif family. As to quaternary structure, interacts with host PLEKHM2. Interacts with SseJ; the interaction is indirect.

The protein localises to the secreted. The protein resides in the host cytoplasm. Its subcellular location is the host cell membrane. Effector proteins function to alter host cell physiology and promote bacterial survival in host tissues. This protein is required for endosomal tubulation and formation of Salmonella-induced filaments (Sifs), which are filamentous structures containing lysosomal membrane glycoproteins within epithelial cells. Sif formation is concomitant with intracellular bacterial replication. The chain is Secreted effector protein SifA (sifA) from Salmonella typhimurium (strain LT2 / SGSC1412 / ATCC 700720).